The primary structure comprises 382 residues: Cytochrome b (382 aa).

Helical transmembrane passes span 28–48, 72–94, 107–127, and 169–189; these read YGFL…FLAS, WCFR…LHIL, SWIS…IGYV, and FFVL…IHIF. 2 residues coordinate heme b: histidine 78 and histidine 92. Heme b contacts are provided by histidine 173 and histidine 187. Histidine 192 serves as a coordination point for a ubiquinone. Transmembrane regions (helical) follow at residues 214–234, 274–294, 317–337, and 340–360; these read LLSL…LQSI, IPSK…LFLL, VPMI…CQLP, and IFIL…LFAL.

This sequence belongs to the cytochrome b family. The main subunits of complex b-c1 are: cytochrome b, cytochrome c1 and the Rieske protein. Heme b is required as a cofactor.

The protein resides in the mitochondrion inner membrane. Its function is as follows. Component of the ubiquinol-cytochrome c reductase complex (complex III or cytochrome b-c1 complex) that is part of the mitochondrial respiratory chain. The b-c1 complex mediates electron transfer from ubiquinol to cytochrome c. Contributes to the generation of a proton gradient across the mitochondrial membrane that is then used for ATP synthesis. This is Cytochrome b (MT-CYB) from Plasmodium vivax (strain Salvador I).